The chain runs to 255 residues: MSSIGTGYDLSASTFSPDGRVFQVEYAMKAVENSSTAIGIRCKDGVVFGVEKLVLSKLYEEGSNKRLFNVDRHVGMAVAGLLADARSLADIAREEASNFRSNFGYNIPLKHLADRVAMYVHAYTLYSAVRPFGCSFMLGSYSVNDGAQLYMIDPSGVSYGYWGCAIGKARQAAKTEIEKLQMKEMTCRDVVKEVAKIIYIVHDEVKDKAFELELSWVGEITNGRHEIVPKDVREEAEKYAKESLKEEDESDDDNM.

The residue at position 2 (serine 2) is an N-acetylserine. N6-acetyllysine occurs at positions 57, 206, and 230. Phosphoserine is present on residues serine 243 and serine 250.

Belongs to the peptidase T1A family. As to quaternary structure, the 26S proteasome consists of a 20S proteasome core and two 19S regulatory subunits. The 20S proteasome core is a barrel-shaped complex made of 28 subunits that are arranged in four stacked rings. The two outer rings are each formed by seven alpha subunits, and the two inner rings are formed by seven beta subunits. The proteolytic activity is exerted by three beta-subunits PSMB5, PSMB6 and PSMB7. Interacts with AURKB. Interacts with CDKN1A. Interacts with MDM2 and RB1. Interacts with the C-terminus of TBXA2R isoform 2. Interacts with DNAJB2.

Its subcellular location is the cytoplasm. It is found in the nucleus. Component of the 20S core proteasome complex involved in the proteolytic degradation of most intracellular proteins. This complex plays numerous essential roles within the cell by associating with different regulatory particles. Associated with two 19S regulatory particles, forms the 26S proteasome and thus participates in the ATP-dependent degradation of ubiquitinated proteins. The 26S proteasome plays a key role in the maintenance of protein homeostasis by removing misfolded or damaged proteins that could impair cellular functions, and by removing proteins whose functions are no longer required. Associated with the PA200 or PA28, the 20S proteasome mediates ubiquitin-independent protein degradation. This type of proteolysis is required in several pathways including spermatogenesis (20S-PA200 complex) or generation of a subset of MHC class I-presented antigenic peptides (20S-PA28 complex). Binds to the C-terminus of CDKN1A and thereby mediates its degradation. Negatively regulates the membrane trafficking of the cell-surface thromboxane A2 receptor (TBXA2R) isoform 2. This chain is Proteasome subunit alpha type-3 (PSMA3), found in Bos taurus (Bovine).